The chain runs to 321 residues: Polyprenyl transferase cle5 (321 aa).

9 helical membrane passes run 26–46, 57–77, 107–127, 132–149, 159–179, 189–209, 232–252, 262–282, and 300–320; these read PLLA…HKIT, VLSQ…AGMV, EALV…SWML, VQAA…YPFA, IYPQ…GTLA, LWAS…WTLY, VLAG…VLGA, SQWL…GQLV, and FALG…GGNG.

Belongs to the UbiA prenyltransferase family. The cofactor is Mg(2+).

It is found in the membrane. It participates in secondary metabolite biosynthesis; terpenoid biosynthesis. Functionally, polyprenyl transferase; part of the cluster A that mediates the biosynthesis of chevalone E and its oxidized derivatives that possess a unique five-membered lactone ring and can synergistically enhance the cytotoxicity of doxorubicin (DOX) in breast cancer cells. Within the pathway, cle5 takes part to the biosynthesis of the molecular scaffold by catalyzing the C-3 geranylgeranylation reaction of triacetic acid lactone (TAL) produced by cle1. The molecular scaffold is commonly biosynthesized by a series of enzymes including the non-reducing polyketide synthase (NR-PKS) cle1 that produces the alpha-pyrone triacetic acid lactone (TAL); The membrane-bound prenyltransferase cle5 that accepts TAL as its substrate to perform a C-3 geranylgeranylation reaction, in which the pathway-dedicated GGPS cle6 is required to provide GGPP, the other substrate of cle5; the FAD-dependent monooxygenase Cle3 that forms an (S)-epoxide ring at the terminal olefin of the geranylgeranyl group; and the terpene cyclase Cle7 that catalyzes the cyclization of the prenyl group that yields the pentacyclic pathway intermediate chevalone E. Chevalone E can derivatize into seven new oxidized analogs by the cytochrome P450 monooxygenases cle2 (acting at C-20) and cle4 (acting at C-11 and C-12). The chain is Polyprenyl transferase cle5 from Aspergillus versicolor.